The following is a 315-amino-acid chain: tRNA-dihydrouridine(16) synthase (315 aa).

FMN is bound by residues 7 to 9 and glutamine 68; that span reads PME. The active-site Proton donor is cysteine 98. FMN-binding positions include lysine 139, 199–201, and 223–224; these read NGE and GR.

Belongs to the Dus family. DusC subfamily. The cofactor is FMN.

The enzyme catalyses 5,6-dihydrouridine(16) in tRNA + NADP(+) = uridine(16) in tRNA + NADPH + H(+). It carries out the reaction 5,6-dihydrouridine(16) in tRNA + NAD(+) = uridine(16) in tRNA + NADH + H(+). Its function is as follows. Catalyzes the synthesis of 5,6-dihydrouridine (D), a modified base found in the D-loop of most tRNAs, via the reduction of the C5-C6 double bond in target uridines. Specifically modifies U16 in tRNAs. This chain is tRNA-dihydrouridine(16) synthase, found in Shewanella oneidensis (strain ATCC 700550 / JCM 31522 / CIP 106686 / LMG 19005 / NCIMB 14063 / MR-1).